A 128-amino-acid polypeptide reads, in one-letter code: Sulfurtransferase TusD (128 aa).

Cys-78 functions as the Cysteine persulfide intermediate in the catalytic mechanism.

Belongs to the DsrE/TusD family. In terms of assembly, heterohexamer, formed by a dimer of trimers. The hexameric TusBCD complex contains 2 copies each of TusB, TusC and TusD. The TusBCD complex interacts with TusE.

The protein resides in the cytoplasm. In terms of biological role, part of a sulfur-relay system required for 2-thiolation of 5-methylaminomethyl-2-thiouridine (mnm(5)s(2)U) at tRNA wobble positions. Accepts sulfur from TusA and transfers it in turn to TusE. In Shigella boydii serotype 18 (strain CDC 3083-94 / BS512), this protein is Sulfurtransferase TusD.